A 127-amino-acid polypeptide reads, in one-letter code: V-type proton ATPase subunit F (127 aa).

Belongs to the V-ATPase F subunit family. In terms of assembly, V-ATPase is a heteromultimeric enzyme made up of two complexes: the ATP-hydrolytic V1 complex and the proton translocation V0 complex. The V1 complex consists of three catalytic AB heterodimers that form a heterohexamer, three peripheral stalks each consisting of EG heterodimers, one central rotor including subunits D and F, and the regulatory subunits C and H. The proton translocation complex V0 consists of the proton transport subunit a, a ring of proteolipid subunits c9c'', rotary subunit d, subunits e and f, and the accessory subunits VhaAC45 and ATP6AP2.

Subunit of the V1 complex of vacuolar(H+)-ATPase (V-ATPase), a multisubunit enzyme composed of a peripheral complex (V1) that hydrolyzes ATP and a membrane integral complex (V0) that translocates protons. V-ATPase is responsible for acidifying and maintaining the pH of intracellular compartments and in some cell types, is targeted to the plasma membrane, where it is responsible for acidifying the extracellular environment. This Anopheles gambiae (African malaria mosquito) protein is V-type proton ATPase subunit F (Vha14).